Here is a 346-residue protein sequence, read N- to C-terminus: UDP-N-acetylenolpyruvoylglucosamine reductase (346 aa).

Residues 22 to 194 (GFDVRARFAC…TSVTFRLPKV (173 aa)) form the FAD-binding PCMH-type domain. Residue Arg-170 is part of the active site. Catalysis depends on Ser-246, which acts as the Proton donor. The active site involves Glu-342.

Belongs to the MurB family. It depends on FAD as a cofactor.

It localises to the cytoplasm. The enzyme catalyses UDP-N-acetyl-alpha-D-muramate + NADP(+) = UDP-N-acetyl-3-O-(1-carboxyvinyl)-alpha-D-glucosamine + NADPH + H(+). The protein operates within cell wall biogenesis; peptidoglycan biosynthesis. Its function is as follows. Cell wall formation. The sequence is that of UDP-N-acetylenolpyruvoylglucosamine reductase from Paraburkholderia xenovorans (strain LB400).